Consider the following 213-residue polypeptide: Imidazole glycerol phosphate synthase subunit HisH 1 (213 aa).

Residues 4–213 (TVAVIDYGMG…QNFVAWDGRW (210 aa)) enclose the Glutamine amidotransferase type-1 domain. Cys-82 serves as the catalytic Nucleophile. Active-site residues include His-191 and Glu-193.

Heterodimer of HisH and HisF.

The protein localises to the cytoplasm. The catalysed reaction is 5-[(5-phospho-1-deoxy-D-ribulos-1-ylimino)methylamino]-1-(5-phospho-beta-D-ribosyl)imidazole-4-carboxamide + L-glutamine = D-erythro-1-(imidazol-4-yl)glycerol 3-phosphate + 5-amino-1-(5-phospho-beta-D-ribosyl)imidazole-4-carboxamide + L-glutamate + H(+). The enzyme catalyses L-glutamine + H2O = L-glutamate + NH4(+). The protein operates within amino-acid biosynthesis; L-histidine biosynthesis; L-histidine from 5-phospho-alpha-D-ribose 1-diphosphate: step 5/9. Functionally, IGPS catalyzes the conversion of PRFAR and glutamine to IGP, AICAR and glutamate. The HisH subunit provides the glutamine amidotransferase activity that produces the ammonia necessary to HisF for the synthesis of IGP and AICAR. The polypeptide is Imidazole glycerol phosphate synthase subunit HisH 1 (hisH1) (Pseudomonas aeruginosa (strain ATCC 15692 / DSM 22644 / CIP 104116 / JCM 14847 / LMG 12228 / 1C / PRS 101 / PAO1)).